The chain runs to 874 residues: Alanine--tRNA ligase (874 aa).

Zn(2+) contacts are provided by His-564, His-568, Cys-665, and His-669.

It belongs to the class-II aminoacyl-tRNA synthetase family. Requires Zn(2+) as cofactor.

It is found in the cytoplasm. The enzyme catalyses tRNA(Ala) + L-alanine + ATP = L-alanyl-tRNA(Ala) + AMP + diphosphate. Its function is as follows. Catalyzes the attachment of alanine to tRNA(Ala) in a two-step reaction: alanine is first activated by ATP to form Ala-AMP and then transferred to the acceptor end of tRNA(Ala). Also edits incorrectly charged Ser-tRNA(Ala) and Gly-tRNA(Ala) via its editing domain. In Delftia acidovorans (strain DSM 14801 / SPH-1), this protein is Alanine--tRNA ligase.